A 680-amino-acid chain; its full sequence is Serine/threonine-protein kinase YPK1 (680 aa).

Basic residues predominate over residues Met1–Gly11. Residues Met1–Ser117 are disordered. 2 stretches are compositionally biased toward basic and acidic residues: residues Lys12–His21 and Gly41–Gly56. The residue at position 57 (Thr57) is a Phosphothreonine. A compositionally biased stretch (low complexity) spans Asn59–Ser71. Ser61, Ser64, and Ser71 each carry phosphoserine. Polar residues predominate over residues Asp73–Asp83. The segment covering Ser84–Asn97 has biased composition (low complexity). Residues Leu98–Ser117 are compositionally biased toward polar residues. Ser170 is modified (phosphoserine). A Protein kinase domain is found at Phe347 to Phe602. ATP contacts are provided by residues Ile353–Val361 and Lys376. Catalysis depends on Asp470, which acts as the Proton acceptor. Thr502 carries the phosphothreonine modification. At Thr504 the chain carries Phosphothreonine; by PKH1. An AGC-kinase C-terminal domain is found at Ser603–Met673. A phosphoserine mark is found at Ser644 and Ser653. Thr662 bears the Phosphothreonine; by PKH1 mark. Ser671 bears the Phosphoserine mark.

It belongs to the protein kinase superfamily. AGC Ser/Thr protein kinase family. RAC subfamily. Autophosphorylated. Phytosphingosine level stimulates phosphorylation by PKH1. The N-terminal half is phosphorylated by FPK1. Phosphorylation is inhibited by exogenous addition of phytosphingosine.

The protein resides in the cytoplasm. The protein localises to the cell membrane. It carries out the reaction L-seryl-[protein] + ATP = O-phospho-L-seryl-[protein] + ADP + H(+). It catalyses the reaction L-threonyl-[protein] + ATP = O-phospho-L-threonyl-[protein] + ADP + H(+). Its activity is regulated as follows. Activated by phytosphingosine (PHS), a sphingoid long chain base. Activated by PKH1 phosphorylation. Plays an essential role in the proliferation of yeast cells. Involved in a signaling pathway, required for optimal cell wall integrity, that acts in parallel with the PKC1-SLT2-dependent pathway. Downstream kinase in the sphingolipid-mediated signaling pathway. Phosphorylation is regulated by the intracellular sphingolipid concentration. Disruption or inhibition of sphingolipid synthesis leads to the activation and phosphorylation of YPK1 through the TORC2 and PKH1 pathways, which in turn phosphorylates ORM1 and LAG1 to activate sphingolipid synthesis. Cooperates with SLI1 in mediating resistance to the sphingolipid biosynthesis inhibitor drug myriocin (ISP-1); kinase activity is essential for the resistance. Required for both receptor-mediated and fluid-phase endocytosis, but is not necessary for receptor phosphorylation or ubiquitination. Necessary for the internalization of plasma membrane proteins carrying different types of internalization signals. Acts downstream of the PKH kinases to control endocytosis by phosphorylating components of the endocytic machinery. Phosphorylation of residue Thr-504 in the activation loop and residue Thr-662 are essential for activity. Phosphorylates and down-regulates flippase activator FPK1. This is Serine/threonine-protein kinase YPK1 (YPK1) from Saccharomyces cerevisiae (strain ATCC 204508 / S288c) (Baker's yeast).